We begin with the raw amino-acid sequence, 707 residues long: Integrator complex subunit 13 (707 aa).

Over residues 565–625 (PPEEEERKKR…AEAEVIKDSP (61 aa)) the composition is skewed to basic and acidic residues. Residues 565–651 (PPEEEERKKR…TGPAEKSKGP (87 aa)) are disordered. Residues 567–622 (EEEERKKRGRKREDKEEKAEKPPKENEHEKKWQESERVKSVLDREKEDLAEAEVIK) are a coiled coil. A Nuclear localization signal (NLS) motif is present at residues 573–583 (KRGRKREDKEE). Residues 650-695 (GPMSLLSLWSSRINTANSRKHQEFVGRLNSVNNKAELYQHLKEENG) form a cleavage module binding motif (CMBM) region.

The protein belongs to the Integrator subunit 13 family. As to quaternary structure, component of the Integrator complex, composed of core subunits INTS1, INTS2, INTS3, INTS4, INTS5, INTS6, INTS7, INTS8, INTS9/RC74, INTS10, INTS11/CPSF3L, INTS12, INTS13, INTS14 and INTS15. The core complex associates with protein phosphatase 2A subunits PPP2CA and PPP2R1A, to form the Integrator-PP2A (INTAC) complex. INTS13 is part of the tail subcomplex, composed of INTS10, INTS13, INTS14 and INTS15.

The protein localises to the nucleus. The protein resides in the cytoplasm. Component of the integrator complex, a multiprotein complex that terminates RNA polymerase II (Pol II) transcription in the promoter-proximal region of genes. The integrator complex provides a quality checkpoint during transcription elongation by driving premature transcription termination of transcripts that are unfavorably configured for transcriptional elongation: the complex terminates transcription by (1) catalyzing dephosphorylation of the C-terminal domain (CTD) of Pol II subunit POLR2A/RPB1 and SUPT5H/SPT5, (2) degrading the exiting nascent RNA transcript via endonuclease activity and (3) promoting the release of Pol II from bound DNA. The integrator complex is also involved in terminating the synthesis of non-coding Pol II transcripts, such as enhancer RNAs (eRNAs), small nuclear RNAs (snRNAs), telomerase RNAs and long non-coding RNAs (lncRNAs). Within the integrator complex, INTS13 is part of the integrator tail module and acts as a platform for the recruitment of transcription factors at promoters. This Xenopus tropicalis (Western clawed frog) protein is Integrator complex subunit 13.